The primary structure comprises 691 residues: Methionine--tRNA ligase (691 aa).

Positions 14-24 match the 'HIGH' region motif; that stretch reads PYANGPFHLGH. C148, C151, C161, and C164 together coordinate Zn(2+). The short motif at 344–348 is the 'KMSKS' region element; the sequence is KMSKS. Residue K347 participates in ATP binding. One can recognise a tRNA-binding domain in the interval 585–691; sequence DFDRVDLRVA…PGAKPGMRVR (107 aa).

Belongs to the class-I aminoacyl-tRNA synthetase family. MetG type 1 subfamily. In terms of assembly, homodimer. The cofactor is Zn(2+).

Its subcellular location is the cytoplasm. The enzyme catalyses tRNA(Met) + L-methionine + ATP = L-methionyl-tRNA(Met) + AMP + diphosphate. Is required not only for elongation of protein synthesis but also for the initiation of all mRNA translation through initiator tRNA(fMet) aminoacylation. The sequence is that of Methionine--tRNA ligase from Verminephrobacter eiseniae (strain EF01-2).